We begin with the raw amino-acid sequence, 352 residues long: Ion-translocating oxidoreductase complex subunit D (352 aa).

The next 5 membrane-spanning stretches (helical) occupy residues 20–40 (IMLLVLLAAVPGIAAQLWFFG), 42–62 (GTLVQILLASVSALLAEALVL), 78–109 (ALLTGLLLAVSIPPLAPWWMVVLGTVFAVIIA), 123–143 (PAMIGYVVLLISFPVQMTSWL), and 148–168 (IAVNIPGFIDAIQVIFSGHTA). At Thr187 the chain carries FMN phosphoryl threonine. Helical transmembrane passes span 214–234 (ILAGAGWQWVNLAWLAGGVWL), 242–262 (WHIPLSFLVTLALCATLGWLF), 267–287 (LAAPQIHLLSGATMLGAFFIL), and 301–318 (LMFGALAGLLVWLIRSFG).

The protein belongs to the NqrB/RnfD family. As to quaternary structure, the complex is composed of six subunits: RsxA, RsxB, RsxC, RsxD, RsxE and RsxG. The cofactor is FMN.

It localises to the cell inner membrane. In terms of biological role, part of a membrane-bound complex that couples electron transfer with translocation of ions across the membrane. Required to maintain the reduced state of SoxR. This chain is Ion-translocating oxidoreductase complex subunit D, found in Shigella flexneri serotype 5b (strain 8401).